The chain runs to 120 residues: Immunoglobulin kappa variable 2-24 (120 aa).

The N-terminal stretch at 1-19 (MRLLAQLLGLLMLWVPGSS) is a signal peptide. The Ig-like domain occupies 20-120 (GDIVMTQTPL…YYCMQATQFP (101 aa)). The framework-1 stretch occupies residues 21-43 (DIVMTQTPLSSPVTLGQPASISC). Residues Cys43 and Cys113 are joined by a disulfide bond. Positions 44–59 (RSSQSLVHSDGNTYLS) are complementarity-determining-1. The segment at 60-74 (WLQQRPGQPPRLLIY) is framework-2. Positions 75-81 (KISNRFS) are complementarity-determining-2. The framework-3 stretch occupies residues 82–113 (GVPDRFSGSGAGTDFTLKISRVEAEDVGVYYC). Residues 114–120 (MQATQFP) are complementarity-determining-3.

In terms of assembly, immunoglobulins are composed of two identical heavy chains and two identical light chains; disulfide-linked.

The protein resides in the secreted. It is found in the cell membrane. In terms of biological role, v region of the variable domain of immunoglobulin light chains that participates in the antigen recognition. Immunoglobulins, also known as antibodies, are membrane-bound or secreted glycoproteins produced by B lymphocytes. In the recognition phase of humoral immunity, the membrane-bound immunoglobulins serve as receptors which, upon binding of a specific antigen, trigger the clonal expansion and differentiation of B lymphocytes into immunoglobulins-secreting plasma cells. Secreted immunoglobulins mediate the effector phase of humoral immunity, which results in the elimination of bound antigens. The antigen binding site is formed by the variable domain of one heavy chain, together with that of its associated light chain. Thus, each immunoglobulin has two antigen binding sites with remarkable affinity for a particular antigen. The variable domains are assembled by a process called V-(D)-J rearrangement and can then be subjected to somatic hypermutations which, after exposure to antigen and selection, allow affinity maturation for a particular antigen. This Homo sapiens (Human) protein is Immunoglobulin kappa variable 2-24.